The sequence spans 246 residues: Small ribosomal subunit protein uS2 (246 aa).

It belongs to the universal ribosomal protein uS2 family.

The chain is Small ribosomal subunit protein uS2 from Burkholderia cenocepacia (strain ATCC BAA-245 / DSM 16553 / LMG 16656 / NCTC 13227 / J2315 / CF5610) (Burkholderia cepacia (strain J2315)).